We begin with the raw amino-acid sequence, 256 residues long: Dihydroorotate dehydrogenase B (NAD(+)), electron transfer subunit (256 aa).

Positions 1–101 (MKKAHLTVQS…LGPLGNGFPV (101 aa)) constitute an FAD-binding FR-type domain. Residues 52–55 (RPLS), 69–71 (IYR), and 76–77 (GT) contribute to the FAD site. 4 residues coordinate [2Fe-2S] cluster: Cys-220, Cys-225, Cys-228, and Cys-243.

This sequence belongs to the PyrK family. In terms of assembly, heterotetramer of 2 PyrK and 2 PyrD type B subunits. It depends on [2Fe-2S] cluster as a cofactor. FAD serves as cofactor.

Its pathway is pyrimidine metabolism; UMP biosynthesis via de novo pathway; orotate from (S)-dihydroorotate (NAD(+) route): step 1/1. Responsible for channeling the electrons from the oxidation of dihydroorotate from the FMN redox center in the PyrD type B subunit to the ultimate electron acceptor NAD(+). The polypeptide is Dihydroorotate dehydrogenase B (NAD(+)), electron transfer subunit (Bacillus velezensis (strain DSM 23117 / BGSC 10A6 / LMG 26770 / FZB42) (Bacillus amyloliquefaciens subsp. plantarum)).